Reading from the N-terminus, the 1273-residue chain is Lysine-specific histone demethylase 2 (1273 aa).

The segment covering 199–230 (ENFFDANSPSSQQFPSTYPSRSQNPLSSSGDG) has biased composition (polar residues). Residues 199 to 237 (ENFFDANSPSSQQFPSTYPSRSQNPLSSSGDGSTAIHAG) are disordered. The stretch at 247 to 307 (FSNYPYPLDA…LSKSVDNAVL (61 aa)) forms a coiled coil. In terms of domain architecture, SWIRM spans 394 to 490 (AAEAARKCNL…YGCLSFDSSF (97 aa)). FAD is bound by residues 509 to 551 (IAVV…ILEA), threonine 517, glutamate 550, arginine 558, and 572 to 573 (TQ). Positions 542–1198 (LPPKVIILEA…GKILRYQRLT (657 aa)) are demethylase activity. The interval 571–596 (ATQINHHTSNSNSISSNSTSLNPKDV) is disordered. The segment covering 574-590 (INHHTSNSNSISSNSTS) has biased composition (low complexity). Residues 681–767 (SVRISWISQF…NTVDTDFSKD (87 aa)) are a coiled coil. Positions 1115 to 1195 (SKPNANPFLL…AYAGKILRYQ (81 aa)) form a DNA-binding region, HMG box. FAD contacts are provided by residues aspartate 1147 and 1156-1157 (ET). A disordered region spans residues 1215-1273 (KCQDEPIPDDEARLFMQAQREEEQRKQTQDDNISKSREASDEEYHDDGSSDSGYNGTRY). Positions 1233–1253 (QREEEQRKQTQDDNISKSREA) are enriched in basic and acidic residues. Residues 1264–1273 (SDSGYNGTRY) are compositionally biased toward polar residues.

It belongs to the flavin monoamine oxidase family. Component of the SWM histone demethylase complex composed of at least lsd1, lsd2, phf1 and phf2. Interacts directly with lsd1. FAD serves as cofactor.

Its subcellular location is the nucleus. Its function is as follows. Catalytic component of the SWM histone demethylase complex that specifically demethylates H3K9me2, a specific tag for epigenetic transcriptional activation, thereby acting as a corepressor. Acts by oxidizing the substrate by FAD to generate the corresponding imine that is subsequently hydrolyzed. Has a role in regulating heterochromatin propagation and euchromatic transcription. Also has a gene activating role. The polypeptide is Lysine-specific histone demethylase 2 (lsd2) (Schizosaccharomyces pombe (strain 972 / ATCC 24843) (Fission yeast)).